The primary structure comprises 152 residues: Xanthine-guanine phosphoribosyltransferase (152 aa).

5-phospho-alpha-D-ribose 1-diphosphate is bound by residues 37 to 38 (RG), Arg69, and 88 to 96 (DDLVDTGVT). GMP is bound at residue Arg69. Position 89 (Asp89) interacts with Mg(2+). Residues Asp92 and Ile135 each coordinate guanine. Residues Asp92 and Ile135 each contribute to the xanthine site. Residues 92 to 96 (DTGVT) and 134 to 135 (WI) contribute to the GMP site.

Belongs to the purine/pyrimidine phosphoribosyltransferase family. XGPT subfamily. Homotetramer. It depends on Mg(2+) as a cofactor.

The protein localises to the cell inner membrane. It catalyses the reaction GMP + diphosphate = guanine + 5-phospho-alpha-D-ribose 1-diphosphate. It carries out the reaction XMP + diphosphate = xanthine + 5-phospho-alpha-D-ribose 1-diphosphate. The catalysed reaction is IMP + diphosphate = hypoxanthine + 5-phospho-alpha-D-ribose 1-diphosphate. It functions in the pathway purine metabolism; GMP biosynthesis via salvage pathway; GMP from guanine: step 1/1. It participates in purine metabolism; XMP biosynthesis via salvage pathway; XMP from xanthine: step 1/1. Functionally, purine salvage pathway enzyme that catalyzes the transfer of the ribosyl-5-phosphate group from 5-phospho-alpha-D-ribose 1-diphosphate (PRPP) to the N9 position of the 6-oxopurines guanine and xanthine to form the corresponding ribonucleotides GMP (guanosine 5'-monophosphate) and XMP (xanthosine 5'-monophosphate), with the release of PPi. To a lesser extent, also acts on hypoxanthine. This is Xanthine-guanine phosphoribosyltransferase from Sodalis glossinidius (strain morsitans).